A 137-amino-acid chain; its full sequence is Early nodulin-55-1 (137 aa).

Positions 1–67 (KYDERTESVH…GLKLMVVVMS (67 aa)) constitute a Phytocyanin domain. Asparagine 13, asparagine 51, and asparagine 68 each carry an N-linked (GlcNAc...) asparagine glycan. A disulfide bridge connects residues cysteine 20 and cysteine 55. The tract at residues 70-115 (TKKKLIHSPSPSSPSPSPSPSPSPSPSPSPSLSSPSPSPLPNNQGV) is disordered. The segment covering 80 to 98 (PSSPSPSPSPSPSPSPSPS) has biased composition (pro residues).

It belongs to the early nodulin-like (ENODL) family.

It localises to the symbiosome. It is found in the peribacteroid membrane. Functionally, may act as a carbohydrate transporter. The protein is Early nodulin-55-1 of Glycine max (Soybean).